Here is a 393-residue protein sequence, read N- to C-terminus: 26S proteasome regulatory subunit 10B (393 aa).

178–185 (GPPGTGKT) contributes to the ATP binding site.

The protein belongs to the AAA ATPase family.

The protein resides in the cytoplasm. It localises to the nucleus. The 26S proteasome is involved in the ATP-dependent degradation of ubiquitinated proteins. The regulatory (or ATPase) complex confers ATP dependency and substrate specificity to the 26S complex. The sequence is that of 26S proteasome regulatory subunit 10B (psmC6) from Dictyostelium discoideum (Social amoeba).